The sequence spans 469 residues: Adenosylhomocysteinase (469 aa).

Substrate is bound by residues Thr63, Asp139, and Glu164. 165–167 contributes to the NAD(+) binding site; sequence TTT. 2 residues coordinate substrate: Lys194 and Asp198. Residues Asn199, 228–233, Glu251, Asn300, 321–323, and Asn375 contribute to the NAD(+) site; these read GYGDVG and IGH.

It belongs to the adenosylhomocysteinase family. The cofactor is NAD(+).

It localises to the cytoplasm. It catalyses the reaction S-adenosyl-L-homocysteine + H2O = L-homocysteine + adenosine. It functions in the pathway amino-acid biosynthesis; L-homocysteine biosynthesis; L-homocysteine from S-adenosyl-L-homocysteine: step 1/1. Functionally, may play a key role in the regulation of the intracellular concentration of adenosylhomocysteine. The chain is Adenosylhomocysteinase from Pseudomonas putida (strain ATCC 700007 / DSM 6899 / JCM 31910 / BCRC 17059 / LMG 24140 / F1).